We begin with the raw amino-acid sequence, 341 residues long: HTH-type transcriptional repressor PurR (341 aa).

The region spanning 2-56 is the HTH lacI-type domain; that stretch reads ATIKDVAKRANVSTTTVSHVINKTRFVAEETRNAVWAAIKELHYSPSAVARSLKV. A DNA-binding region (H-T-H motif) is located at residues 4 to 23; it reads IKDVAKRANVSTTTVSHVIN. The DNA-binding element occupies 48-56; the sequence is SAVARSLKV. Hypoxanthine-binding residues include Tyr73, Arg190, Thr192, Phe221, and Asp275.

Homodimer.

The protein operates within purine metabolism; purine nucleotide biosynthesis [regulation]. Is the main repressor of the genes involved in the de novo synthesis of purine nucleotides, regulating purB, purC, purEK, purF, purHD, purL, purMN and guaBA expression. PurR is allosterically activated to bind its cognate DNA by binding the purine corepressors, hypoxanthine or guanine, thereby effecting transcription repression. The chain is HTH-type transcriptional repressor PurR from Shigella sonnei (strain Ss046).